The following is a 213-amino-acid chain: MKPYQRQFIEFALNKQVLKFGEFTLKSGRQSPYFFNAGLFNTGRDLALLGRFYAEALVDSGVDFDLLFGPAYKGIPIATTTAVALAEHHERDVPYCFNRKEAKDHGEGGNLVGSPLQGRVMLVDDVITAGTAIRESMEIIQANGATLAGVMISLDRQERGRGELSAIQEVERDYGCQVIAIITLNDLIAYLAEKPEMANHLAAVEAYRQQYGV.

Lysine 26 is a binding site for 5-phospho-alpha-D-ribose 1-diphosphate. 34–35 (FF) provides a ligand contact to orotate. 5-phospho-alpha-D-ribose 1-diphosphate-binding positions include 72–73 (YK), arginine 99, lysine 100, lysine 103, histidine 105, and 124–132 (DDVITAGTA). Residues threonine 128 and arginine 156 each coordinate orotate.

This sequence belongs to the purine/pyrimidine phosphoribosyltransferase family. PyrE subfamily. In terms of assembly, homodimer. The cofactor is Mg(2+).

The enzyme catalyses orotidine 5'-phosphate + diphosphate = orotate + 5-phospho-alpha-D-ribose 1-diphosphate. Its pathway is pyrimidine metabolism; UMP biosynthesis via de novo pathway; UMP from orotate: step 1/2. Functionally, catalyzes the transfer of a ribosyl phosphate group from 5-phosphoribose 1-diphosphate to orotate, leading to the formation of orotidine monophosphate (OMP). The sequence is that of Orotate phosphoribosyltransferase from Cronobacter sakazakii (strain ATCC BAA-894) (Enterobacter sakazakii).